We begin with the raw amino-acid sequence, 230 residues long: Orotidine 5'-phosphate decarboxylase (230 aa).

Substrate contacts are provided by residues Asp-11, Lys-34, 61-70 (DLKLHDIPNT), Thr-117, Arg-179, Gln-188, Gly-208, and Arg-209. Lys-63 serves as the catalytic Proton donor.

Belongs to the OMP decarboxylase family. Type 1 subfamily. Homodimer.

The enzyme catalyses orotidine 5'-phosphate + H(+) = UMP + CO2. Its pathway is pyrimidine metabolism; UMP biosynthesis via de novo pathway; UMP from orotate: step 2/2. Functionally, catalyzes the decarboxylation of orotidine 5'-monophosphate (OMP) to uridine 5'-monophosphate (UMP). In Streptococcus equi subsp. zooepidemicus (strain H70), this protein is Orotidine 5'-phosphate decarboxylase.